We begin with the raw amino-acid sequence, 258 residues long: Acetylglutamate kinase (258 aa).

Residues 44–45 (GG), Arg66, and Asn158 contribute to the substrate site. ATP-binding positions include 181–186 (DVSGIL) and 209–211 (IIT).

The protein belongs to the acetylglutamate kinase family. ArgB subfamily. Homodimer.

The protein resides in the cytoplasm. The catalysed reaction is N-acetyl-L-glutamate + ATP = N-acetyl-L-glutamyl 5-phosphate + ADP. It participates in amino-acid biosynthesis; L-arginine biosynthesis; N(2)-acetyl-L-ornithine from L-glutamate: step 2/4. In terms of biological role, catalyzes the ATP-dependent phosphorylation of N-acetyl-L-glutamate. The polypeptide is Acetylglutamate kinase (Shigella flexneri).